The sequence spans 151 residues: 3-hydroxyacyl-[acyl-carrier-protein] dehydratase FabZ (151 aa).

The active site involves H53.

Belongs to the thioester dehydratase family. FabZ subfamily.

The protein localises to the cytoplasm. It carries out the reaction a (3R)-hydroxyacyl-[ACP] = a (2E)-enoyl-[ACP] + H2O. Its function is as follows. Involved in unsaturated fatty acids biosynthesis. Catalyzes the dehydration of short chain beta-hydroxyacyl-ACPs and long chain saturated and unsaturated beta-hydroxyacyl-ACPs. The chain is 3-hydroxyacyl-[acyl-carrier-protein] dehydratase FabZ from Erythrobacter litoralis (strain HTCC2594).